The primary structure comprises 244 residues: 5-oxoprolinase subunit A (244 aa).

This sequence belongs to the LamB/PxpA family. As to quaternary structure, forms a complex composed of PxpA, PxpB and PxpC.

The enzyme catalyses 5-oxo-L-proline + ATP + 2 H2O = L-glutamate + ADP + phosphate + H(+). In terms of biological role, catalyzes the cleavage of 5-oxoproline to form L-glutamate coupled to the hydrolysis of ATP to ADP and inorganic phosphate. This is 5-oxoprolinase subunit A from Escherichia coli (strain SMS-3-5 / SECEC).